The following is a 245-amino-acid chain: 1-(5-phosphoribosyl)-5-[(5-phosphoribosylamino)methylideneamino] imidazole-4-carboxamide isomerase (245 aa).

The active-site Proton acceptor is Asp-8. Asp-130 (proton donor) is an active-site residue.

Belongs to the HisA/HisF family.

It localises to the cytoplasm. The enzyme catalyses 1-(5-phospho-beta-D-ribosyl)-5-[(5-phospho-beta-D-ribosylamino)methylideneamino]imidazole-4-carboxamide = 5-[(5-phospho-1-deoxy-D-ribulos-1-ylimino)methylamino]-1-(5-phospho-beta-D-ribosyl)imidazole-4-carboxamide. It functions in the pathway amino-acid biosynthesis; L-histidine biosynthesis; L-histidine from 5-phospho-alpha-D-ribose 1-diphosphate: step 4/9. The chain is 1-(5-phosphoribosyl)-5-[(5-phosphoribosylamino)methylideneamino] imidazole-4-carboxamide isomerase from Marinobacter nauticus (strain ATCC 700491 / DSM 11845 / VT8) (Marinobacter aquaeolei).